Consider the following 213-residue polypeptide: MWGVVATATYETVYISFASTLLAVLVGVPVGIWTFLTGKNEILQNNRTHFVLNTIINIGRSIPFIILLLILLPVTRFIVGTVLGTTAAIIPLSICAMPFVARLTANALMEIPNGLTEAAQAMGATKWQIVRKFYLSEALPTLINGVTLTLVTLVGYSAMAGTQGGGGLGSLAINYGRIRNMPYVTWVATIIIVLFVMISQKLGDTLAKKVDHR.

Residues 9-202 enclose the ABC transmembrane type-1 domain; that stretch reads TYETVYISFA…VLFVMISQKL (194 aa). The next 5 helical transmembrane spans lie at 13–33, 50–72, 89–109, 139–159, and 183–203; these read VYISFASTLLAVLVGVPVGIW, FVLNTIINIGRSIPFIILLLILL, IIPLSICAMPFVARLTANALM, LPTLINGVTLTLVTLVGYSAM, and YVTWVATIIIVLFVMISQKLG.

It belongs to the binding-protein-dependent transport system permease family. CysTW subfamily.

The protein resides in the cell inner membrane. Part of the binding-protein-dependent transport system for D-methionine. Probably responsible for the translocation of the substrate across the membrane. The chain is Probable D-methionine transport system permease protein MetI (metI) from Haemophilus influenzae (strain ATCC 51907 / DSM 11121 / KW20 / Rd).